Consider the following 410-residue polypeptide: Translation initiation factor 2 subunit gamma (410 aa).

In terms of domain architecture, tr-type G spans 6-203 (QSEVNIGMVG…AIQEFIPTPE (198 aa)). A G1 region spans residues 15–22 (GHVDHGKT). Positions 18, 22, 43, and 45 each coordinate Mg(2+). 18–23 (DHGKTS) is a GTP binding site. Residues 43–47 (GISIR) form a G2 region. Zn(2+)-binding residues include Cys-58, Cys-61, Cys-73, and Cys-76. The tract at residues 90 to 93 (DAPG) is G3. Residues 146 to 149 (NKID) and 181 to 183 (SAH) each bind GTP. Positions 146–149 (NKID) are G4. The interval 181–183 (SAH) is G5.

Belongs to the TRAFAC class translation factor GTPase superfamily. Classic translation factor GTPase family. EIF2G subfamily. Heterotrimer composed of an alpha, a beta and a gamma chain. Requires Mg(2+) as cofactor.

The catalysed reaction is GTP + H2O = GDP + phosphate + H(+). EIF-2 functions in the early steps of protein synthesis by forming a ternary complex with GTP and initiator tRNA. In Methanococcus maripaludis (strain C7 / ATCC BAA-1331), this protein is Translation initiation factor 2 subunit gamma.